We begin with the raw amino-acid sequence, 1181 residues long: MASFLKPVNSQGLWLSLLLAITYLFLLPSAGQSLDPSGIGLAAGCSQSQGGISSFAALPRPCNDSVCTLPDLGWSCQRTAQDTANQQQSPFNHTGHFLTTSGWTWPNWTCSPSQCQLLIHLPTWQIVKQDFLLLLKEWDLLTMCQRCSDLLTKTPGFILRFAGETLILVANLIEFVLVSWSLWLCSVLVYVAQAVPGKFLLYMAAFCTTFWAWPRETASSLIRIVTTPLTLIGFLNKTGIGLISHCLALTWNMFMTWSLLPWVTLMKMMKILITSSRVLTRSGRPKRTSSKSLKHKLKISRAIQKKQGKKTPVEERTIPGVQIKKLREDPPKGVILRCTDQFGDHVGYASAVKLEKGQTGIVLPIHVWTDTVYINGPNGKLKMADFTALYEVTNHDSLIMTSAMAGWGSILGVRPRPLTTIDAVKLKNYSLFTERDGKWYVQAAKCIAPAEGMFRVVSDTRPGDSGLPLFDMKMNVVAVHRGTWPSERFPENRAFAILPVPDLTSSSSPKFTGCETYSEAETAYEMADNFSDGEEILIRTKGQSYRTFIGSNKVALLSIRKLEEELSRGPIGLWADDTEDDESAPRRSGKRIIPVDSGETKSSEDPLPKGRGVSSTPSRSKSRKGKACPSFRNDAGTEESRQPQEEKGQSCQEDSLNSTQEIQGQSTHFVPSSGTGRKSCESSPHRPTTKITSIFEDFYRWKEPREEAPGFNSVGSCPFTVYKCPPKGLSSWGERVARTSAFLQACTEKYSWPETGAEAELSSLRYQAARRQSAQTTAVIPPKDVREDLIKRTTEAYRSTALPAPMWAHNFDESHMRFEFWECVRKLKGQAGSGVPYAAFSGRKTNDKWVFDHESTEDLWETVRDRLFRLLNQDFIDPVQAVKDGLVDPIRLFVKLEPHKMEKIRNKRYRLIASVSIVDQLVARMLFRDQNEEELLQHMAIPSKPGLGFSQDHQVLAFTESVAALAGTSAQDLVDNWSRYLTPTDCSGFDWSVPMWLLEDDLAVRNELTLGLPHGLRKMRETWLKCLGQSVFCLSNGLLLAQTSPGIQKSGSFNTSSTNSRMRYMLALYAGASWAVTMGDDALESVGSDLSQYARLGIKCERAEEFDFCSHLFRAPDVVIPKNLEKMVYGLLSGTSPESPLLADRFSWLSALQSILEEMRHMPQDFVNMLIEHLGVGDLVE.

An N-terminal signal peptide occupies residues 1–33; that stretch reads MASFLKPVNSQGLWLSLLLAITYLFLLPSAGQS. 4 helical membrane passes run 172 to 192, 194 to 214, 218 to 235, and 240 to 260; these read LIEFVLVSWSLWLCSVLVYVA, AVPGKFLLYMAAFCTTFWAWP, ASSLIRIVTTPLTLIGFL, and IGLISHCLALTWNMFMTWSLL. One can recognise a Peptidase S39 domain in the interval 318–515; it reads IPGVQIKKLR…SSSPKFTGCE (198 aa). Active-site for protease activity residues include H366, D396, and S465. The tract at residues 572-688 is disordered; that stretch reads GLWADDTEDD…SCESSPHRPT (117 aa). 2 stretches are compositionally biased toward basic and acidic residues: residues 598–608 and 638–648; these read GETKSSEDPLP and EESRQPQEEKG. A compositionally biased stretch (polar residues) spans 649 to 677; the sequence is QSCQEDSLNSTQEIQGQSTHFVPSSGTGR. In terms of domain architecture, RdRp catalytic spans 979–1094; sequence RYLTPTDCSG…SVGSDLSQYA (116 aa).

Belongs to the luteoviruses RNA polymerase family. In terms of processing, specific enzymatic cleavages in vivo yield mature proteins. The protease probably cleaves itself and releases the RdRp (Potential). Cleavages have been shown in the P1 protein, but since the N-terminus containing the serine protease is shared between P1 and P1-P2, cleavages should also occur within the P1-P2 protein.

It is found in the membrane. It catalyses the reaction RNA(n) + a ribonucleoside 5'-triphosphate = RNA(n+1) + diphosphate. Functionally, RNA-dependent RNA polymerase that plays an essential role in virus replication. In Cicer arietinum (Chickpea), this protein is Protein P1-P2.